We begin with the raw amino-acid sequence, 124 residues long: Ragulator complex protein LAMTOR2 homolog (124 aa).

Belongs to the GAMAD family. As to quaternary structure, part of the Ragulator complex.

Its function is as follows. Regulator of the TOR pathway, a signaling cascade that promotes cell growth in response to growth factors, energy levels, and amino acids. May activate the TOR signaling cascade in response to amino acids. The sequence is that of Ragulator complex protein LAMTOR2 homolog from Caenorhabditis elegans.